The sequence spans 594 residues: Aspartate--tRNA(Asp/Asn) ligase (594 aa).

Glutamate 175 lines the L-aspartate pocket. The segment at glutamine 199–lysine 202 is aspartate. L-aspartate-binding residues include arginine 221 and histidine 455. Residue arginine 221 to glutamate 223 coordinates ATP. Residue glutamate 488 coordinates ATP. Arginine 495 lines the L-aspartate pocket. Glycine 540–arginine 543 lines the ATP pocket.

It belongs to the class-II aminoacyl-tRNA synthetase family. Type 1 subfamily. In terms of assembly, homodimer.

It is found in the cytoplasm. It catalyses the reaction tRNA(Asx) + L-aspartate + ATP = L-aspartyl-tRNA(Asx) + AMP + diphosphate. Its function is as follows. Aspartyl-tRNA synthetase with relaxed tRNA specificity since it is able to aspartylate not only its cognate tRNA(Asp) but also tRNA(Asn). Reaction proceeds in two steps: L-aspartate is first activated by ATP to form Asp-AMP and then transferred to the acceptor end of tRNA(Asp/Asn). The polypeptide is Aspartate--tRNA(Asp/Asn) ligase (Ruegeria sp. (strain TM1040) (Silicibacter sp.)).